The primary structure comprises 430 residues: Dihydroorotase (430 aa).

The Zn(2+) site is built by His-57 and His-59. Substrate-binding positions include 59-61 (HLR) and Asn-91. The Zn(2+) site is built by Asp-151, His-178, and His-231. Asn-277 contributes to the substrate binding site. Position 304 (Asp-304) interacts with Zn(2+). Asp-304 is an active-site residue. Residues His-308 and 322–323 (PG) each bind substrate.

This sequence belongs to the metallo-dependent hydrolases superfamily. DHOase family. Class I DHOase subfamily. The cofactor is Zn(2+).

It carries out the reaction (S)-dihydroorotate + H2O = N-carbamoyl-L-aspartate + H(+). Its pathway is pyrimidine metabolism; UMP biosynthesis via de novo pathway; (S)-dihydroorotate from bicarbonate: step 3/3. Catalyzes the reversible cyclization of carbamoyl aspartate to dihydroorotate. The sequence is that of Dihydroorotase from Mycobacterium leprae (strain TN).